Consider the following 711-residue polypeptide: MND1-interacting protein 1 (711 aa).

Residues 390 to 648 (EWAQKNAMQA…LEGSYDNEAN (259 aa)) adopt a coiled-coil conformation. 2 disordered regions span residues 552–571 (EALA…EGHN) and 602–622 (RLKA…WKPK). The segment covering 602–611 (RLKASSDSDS) has biased composition (basic and acidic residues). Residues 653–697 (CIICMKDEVSVVFLPCAHQVVCGSCSDSFFASNNGGSKVTCPCCR) form an RING-type zinc finger.

Interacts (via C-terminal domain) with MND1 and HOP2. Interacts with XRI1 (via C-terminal domain).

In Arabidopsis thaliana (Mouse-ear cress), this protein is MND1-interacting protein 1 (MIP1).